A 211-amino-acid polypeptide reads, in one-letter code: Outer-membrane lipoprotein carrier protein (211 aa).

Positions 1-24 (MNTIKILIGLLGIFLFSLSGIVSA) are cleaved as a signal peptide.

It belongs to the LolA family. In terms of assembly, monomer.

It is found in the periplasm. Functionally, participates in the translocation of lipoproteins from the inner membrane to the outer membrane. Only forms a complex with a lipoprotein if the residue after the N-terminal Cys is not an aspartate (The Asp acts as a targeting signal to indicate that the lipoprotein should stay in the inner membrane). This chain is Outer-membrane lipoprotein carrier protein, found in Coxiella burnetii (strain RSA 331 / Henzerling II).